The primary structure comprises 296 residues: Phosphatidylserine decarboxylase proenzyme (296 aa).

Active-site charge relay system; for autoendoproteolytic cleavage activity residues include Asp100, His157, and Ser263. The Schiff-base intermediate with substrate; via pyruvic acid; for decarboxylase activity role is filled by Ser263. Ser263 carries the post-translational modification Pyruvic acid (Ser); by autocatalysis.

It belongs to the phosphatidylserine decarboxylase family. PSD-B subfamily. Prokaryotic type I sub-subfamily. As to quaternary structure, heterodimer of a large membrane-associated beta subunit and a small pyruvoyl-containing alpha subunit. Pyruvate is required as a cofactor. Post-translationally, is synthesized initially as an inactive proenzyme. Formation of the active enzyme involves a self-maturation process in which the active site pyruvoyl group is generated from an internal serine residue via an autocatalytic post-translational modification. Two non-identical subunits are generated from the proenzyme in this reaction, and the pyruvate is formed at the N-terminus of the alpha chain, which is derived from the carboxyl end of the proenzyme. The autoendoproteolytic cleavage occurs by a canonical serine protease mechanism, in which the side chain hydroxyl group of the serine supplies its oxygen atom to form the C-terminus of the beta chain, while the remainder of the serine residue undergoes an oxidative deamination to produce ammonia and the pyruvoyl prosthetic group on the alpha chain. During this reaction, the Ser that is part of the protease active site of the proenzyme becomes the pyruvoyl prosthetic group, which constitutes an essential element of the active site of the mature decarboxylase.

It is found in the cell membrane. The catalysed reaction is a 1,2-diacyl-sn-glycero-3-phospho-L-serine + H(+) = a 1,2-diacyl-sn-glycero-3-phosphoethanolamine + CO2. The protein operates within phospholipid metabolism; phosphatidylethanolamine biosynthesis; phosphatidylethanolamine from CDP-diacylglycerol: step 2/2. In terms of biological role, catalyzes the formation of phosphatidylethanolamine (PtdEtn) from phosphatidylserine (PtdSer). The sequence is that of Phosphatidylserine decarboxylase proenzyme from Actinobacillus pleuropneumoniae serotype 7 (strain AP76).